A 206-amino-acid polypeptide reads, in one-letter code: Transmembrane emp24 domain-containing protein bai (206 aa).

The signal sequence occupies residues 1-20 (MMKAILATLAIFGCIWPGQS). Residues 21 to 172 (VMFHLTPNTQ…RDTNEKTNSR (152 aa)) lie on the Lumenal side of the membrane. The GOLD domain occupies 30-140 (QKCLKEDIQA…LKPLEVDLKR (111 aa)). Residues 173–193 (VLFFSIFSMCCLLGLATWQVL) form a helical membrane-spanning segment. Over 194 to 206 (YLRRYFKAKKLIE) the chain is Cytoplasmic.

Belongs to the EMP24/GP25L family.

It is found in the membrane. Functionally, eca and bai are essential, though not redundant, for dorsoventral patterning of the embryo. Specifically required during early embryogenesis for the activity of maternal tkv, while the zygotic tkv is not affected. The polypeptide is Transmembrane emp24 domain-containing protein bai (Drosophila willistoni (Fruit fly)).